A 101-amino-acid chain; its full sequence is Small ribosomal subunit protein uS10 (101 aa).

The protein belongs to the universal ribosomal protein uS10 family. In terms of assembly, part of the 30S ribosomal subunit.

Functionally, involved in the binding of tRNA to the ribosomes. The chain is Small ribosomal subunit protein uS10 from Amoebophilus asiaticus (strain 5a2).